A 336-amino-acid chain; its full sequence is Methionyl-tRNA formyltransferase (336 aa).

112 to 115 is a binding site for (6S)-5,6,7,8-tetrahydrofolate; that stretch reads SILP.

This sequence belongs to the Fmt family.

The catalysed reaction is L-methionyl-tRNA(fMet) + (6R)-10-formyltetrahydrofolate = N-formyl-L-methionyl-tRNA(fMet) + (6S)-5,6,7,8-tetrahydrofolate + H(+). Attaches a formyl group to the free amino group of methionyl-tRNA(fMet). The formyl group appears to play a dual role in the initiator identity of N-formylmethionyl-tRNA by promoting its recognition by IF2 and preventing the misappropriation of this tRNA by the elongation apparatus. The sequence is that of Methionyl-tRNA formyltransferase from Trichodesmium erythraeum (strain IMS101).